Consider the following 83-residue polypeptide: Sec-independent protein translocase protein TatA (83 aa).

Residues 1 to 21 (MGGLSLPHLIVLALVVLILFG) form a helical membrane-spanning segment. The disordered stretch occupies residues 34-83 (KGIKSFKQGMNDEDSKPVTPPPAQIPPASLQQTPPPAQPAPQPTSTDQAQ). The segment covering 66 to 75 (TPPPAQPAPQ) has biased composition (pro residues).

Belongs to the TatA/E family. The Tat system comprises two distinct complexes: a TatABC complex, containing multiple copies of TatA, TatB and TatC subunits, and a separate TatA complex, containing only TatA subunits. Substrates initially bind to the TatABC complex, which probably triggers association of the separate TatA complex to form the active translocon.

Its subcellular location is the cell inner membrane. In terms of biological role, part of the twin-arginine translocation (Tat) system that transports large folded proteins containing a characteristic twin-arginine motif in their signal peptide across membranes. TatA could form the protein-conducting channel of the Tat system. The chain is Sec-independent protein translocase protein TatA from Novosphingobium aromaticivorans (strain ATCC 700278 / DSM 12444 / CCUG 56034 / CIP 105152 / NBRC 16084 / F199).